The chain runs to 121 residues: Small ribosomal subunit protein uS13 (121 aa).

Residues 99–121 (RGQRTRTNSRTRKGPRRKIMKKK) form a disordered region. The segment covering 101–121 (QRTRTNSRTRKGPRRKIMKKK) has biased composition (basic residues).

It belongs to the universal ribosomal protein uS13 family. As to quaternary structure, part of the 30S ribosomal subunit. Forms a loose heterodimer with protein S19. Forms two bridges to the 50S subunit in the 70S ribosome.

In terms of biological role, located at the top of the head of the 30S subunit, it contacts several helices of the 16S rRNA. In the 70S ribosome it contacts the 23S rRNA (bridge B1a) and protein L5 of the 50S subunit (bridge B1b), connecting the 2 subunits; these bridges are implicated in subunit movement. Contacts the tRNAs in the A and P-sites. The protein is Small ribosomal subunit protein uS13 of Thermodesulfovibrio yellowstonii (strain ATCC 51303 / DSM 11347 / YP87).